We begin with the raw amino-acid sequence, 167 residues long: S-ribosylhomocysteine lyase (167 aa).

The Fe cation site is built by His54, His58, and Cys128.

It belongs to the LuxS family. Homodimer. The cofactor is Fe cation.

It catalyses the reaction S-(5-deoxy-D-ribos-5-yl)-L-homocysteine = (S)-4,5-dihydroxypentane-2,3-dione + L-homocysteine. Involved in the synthesis of autoinducer 2 (AI-2) which is secreted by bacteria and is used to communicate both the cell density and the metabolic potential of the environment. The regulation of gene expression in response to changes in cell density is called quorum sensing. Catalyzes the transformation of S-ribosylhomocysteine (RHC) to homocysteine (HC) and 4,5-dihydroxy-2,3-pentadione (DPD). In Haemophilus influenzae (strain PittGG), this protein is S-ribosylhomocysteine lyase.